Reading from the N-terminus, the 249-residue chain is Chitooligosaccharide deacetylase (249 aa).

2 residues coordinate Mg(2+): His-61 and His-125.

It belongs to the YdjC deacetylase family. ChbG subfamily. Homodimer. The cofactor is Mg(2+).

Its subcellular location is the cytoplasm. It carries out the reaction N,N'-diacetylchitobiose + H2O = N-acetyl-beta-D-glucosaminyl-(1-&gt;4)-D-glucosamine + acetate. The catalysed reaction is diacetylchitobiose-6'-phosphate + H2O = N'-monoacetylchitobiose-6'-phosphate + acetate. It functions in the pathway glycan degradation; chitin degradation. In terms of biological role, involved in the degradation of chitin. ChbG is essential for growth on the acetylated chitooligosaccharides chitobiose and chitotriose but is dispensable for growth on cellobiose and chitosan dimer, the deacetylated form of chitobiose. Deacetylation of chitobiose-6-P and chitotriose-6-P is necessary for both the activation of the chb promoter by the regulatory protein ChbR and the hydrolysis of phosphorylated beta-glucosides by the phospho-beta-glucosidase ChbF. Catalyzes the removal of only one acetyl group from chitobiose-6-P to yield monoacetylchitobiose-6-P, the inducer of ChbR and the substrate of ChbF. The protein is Chitooligosaccharide deacetylase of Escherichia coli O17:K52:H18 (strain UMN026 / ExPEC).